The sequence spans 158 residues: NAD(P)H-quinone oxidoreductase subunit J, chloroplastic (158 aa).

Belongs to the complex I 30 kDa subunit family. NDH is composed of at least 16 different subunits, 5 of which are encoded in the nucleus.

The protein resides in the plastid. The protein localises to the chloroplast thylakoid membrane. It catalyses the reaction a plastoquinone + NADH + (n+1) H(+)(in) = a plastoquinol + NAD(+) + n H(+)(out). The catalysed reaction is a plastoquinone + NADPH + (n+1) H(+)(in) = a plastoquinol + NADP(+) + n H(+)(out). In terms of biological role, NDH shuttles electrons from NAD(P)H:plastoquinone, via FMN and iron-sulfur (Fe-S) centers, to quinones in the photosynthetic chain and possibly in a chloroplast respiratory chain. The immediate electron acceptor for the enzyme in this species is believed to be plastoquinone. Couples the redox reaction to proton translocation, and thus conserves the redox energy in a proton gradient. This Ceratophyllum demersum (Rigid hornwort) protein is NAD(P)H-quinone oxidoreductase subunit J, chloroplastic.